The sequence spans 118 residues: Basic phospholipase A2 PA-15 (118 aa).

Cystine bridges form between C11-C71, C27-C117, C29-C45, C44-C98, C51-C91, C60-C84, and C78-C89. Residues Y28, G30, and G32 each coordinate Ca(2+). H48 is an active-site residue. Residue D49 coordinates Ca(2+). D92 is an active-site residue.

It belongs to the phospholipase A2 family. Group I subfamily. D49 sub-subfamily. Ca(2+) serves as cofactor. Expressed by the venom gland.

It is found in the secreted. It carries out the reaction a 1,2-diacyl-sn-glycero-3-phosphocholine + H2O = a 1-acyl-sn-glycero-3-phosphocholine + a fatty acid + H(+). Functionally, PLA2 catalyzes the calcium-dependent hydrolysis of the 2-acyl groups in 3-sn-phosphoglycerides. The protein is Basic phospholipase A2 PA-15 of Pseudechis australis (Mulga snake).